We begin with the raw amino-acid sequence, 127 residues long: NHP2-like protein 1 homolog (127 aa).

This sequence belongs to the eukaryotic ribosomal protein eL8 family.

Its subcellular location is the nucleus. It is found in the nucleolus. Its function is as follows. Binds to the 5'-stem-loop of U4 snRNA and may play a role in the late stage of spliceosome assembly. The protein undergoes a conformational change upon RNA-binding. The chain is NHP2-like protein 1 homolog (hoip) from Drosophila melanogaster (Fruit fly).